The chain runs to 140 residues: Nucleoside diphosphate kinase (140 aa).

K11, F59, R87, T93, R104, and N114 together coordinate ATP. H117 functions as the Pros-phosphohistidine intermediate in the catalytic mechanism.

Belongs to the NDK family. In terms of assembly, homotetramer. Mg(2+) serves as cofactor.

The protein localises to the cytoplasm. It carries out the reaction a 2'-deoxyribonucleoside 5'-diphosphate + ATP = a 2'-deoxyribonucleoside 5'-triphosphate + ADP. It catalyses the reaction a ribonucleoside 5'-diphosphate + ATP = a ribonucleoside 5'-triphosphate + ADP. Functionally, major role in the synthesis of nucleoside triphosphates other than ATP. The ATP gamma phosphate is transferred to the NDP beta phosphate via a ping-pong mechanism, using a phosphorylated active-site intermediate. The chain is Nucleoside diphosphate kinase from Bradyrhizobium sp. (strain ORS 278).